Reading from the N-terminus, the 172-residue chain is Co-chaperone protein HscB homolog (172 aa).

One can recognise a J domain in the interval 2–74 (NHFELFGLVE…LRRAEYLLSL (73 aa)).

This sequence belongs to the HscB family. In terms of assembly, interacts with HscA and stimulates its ATPase activity.

Co-chaperone involved in the maturation of iron-sulfur cluster-containing proteins. Seems to help targeting proteins to be folded toward HscA. This chain is Co-chaperone protein HscB homolog, found in Aeromonas salmonicida (strain A449).